The primary structure comprises 764 residues: 5-methyltetrahydropteroyltriglutamate--homocysteine methyltransferase (764 aa).

Residues 16–19 (RELK) and K121 contribute to the 5-methyltetrahydropteroyltri-L-glutamate site. L-homocysteine-binding positions include 440–442 (IGS) and E493. Residues 440 to 442 (IGS) and E493 each bind L-methionine. 5-methyltetrahydropteroyltri-L-glutamate contacts are provided by residues 524–525 (RC) and W570. D608 is an L-homocysteine binding site. An L-methionine-binding site is contributed by D608. E614 provides a ligand contact to 5-methyltetrahydropteroyltri-L-glutamate. Residues H650, C652, and E674 each contribute to the Zn(2+) site. H703 serves as the catalytic Proton donor. Position 735 (C735) interacts with Zn(2+).

Belongs to the vitamin-B12 independent methionine synthase family. Zn(2+) is required as a cofactor.

The enzyme catalyses 5-methyltetrahydropteroyltri-L-glutamate + L-homocysteine = tetrahydropteroyltri-L-glutamate + L-methionine. The protein operates within amino-acid biosynthesis; L-methionine biosynthesis via de novo pathway; L-methionine from L-homocysteine (MetE route): step 1/1. Its function is as follows. Catalyzes the transfer of a methyl group from 5-methyltetrahydrofolate to homocysteine resulting in methionine formation. The polypeptide is 5-methyltetrahydropteroyltriglutamate--homocysteine methyltransferase (Burkholderia lata (strain ATCC 17760 / DSM 23089 / LMG 22485 / NCIMB 9086 / R18194 / 383)).